The sequence spans 203 residues: MIGKLSGKIDAQGDDYIIIDVNGVGYLVYASGKTLGKLSEGEFYKLFIETHVREEHIHLYGFLTIEEKNFFNLLQSVNGIGTRMALSILSNLTPTDIQIAINNEDKDIFKAISGVGAKLAERIVLELKGKVAKISTGAAIINDSLNIKNITSVASNEVIKALVNLGFSRFEAQNSVQGIVIQNPEISIDELIKTALKNRNAGL.

A domain I region spans residues methionine 1–leucine 63. The interval threonine 64–asparagine 142 is domain II. Residues aspartate 143–asparagine 149 are flexible linker. The tract at residues isoleucine 150 to leucine 203 is domain III.

The protein belongs to the RuvA family. Homotetramer. Forms an RuvA(8)-RuvB(12)-Holliday junction (HJ) complex. HJ DNA is sandwiched between 2 RuvA tetramers; dsDNA enters through RuvA and exits via RuvB. An RuvB hexamer assembles on each DNA strand where it exits the tetramer. Each RuvB hexamer is contacted by two RuvA subunits (via domain III) on 2 adjacent RuvB subunits; this complex drives branch migration. In the full resolvosome a probable DNA-RuvA(4)-RuvB(12)-RuvC(2) complex forms which resolves the HJ.

The protein resides in the cytoplasm. Functionally, the RuvA-RuvB-RuvC complex processes Holliday junction (HJ) DNA during genetic recombination and DNA repair, while the RuvA-RuvB complex plays an important role in the rescue of blocked DNA replication forks via replication fork reversal (RFR). RuvA specifically binds to HJ cruciform DNA, conferring on it an open structure. The RuvB hexamer acts as an ATP-dependent pump, pulling dsDNA into and through the RuvAB complex. HJ branch migration allows RuvC to scan DNA until it finds its consensus sequence, where it cleaves and resolves the cruciform DNA. This chain is Holliday junction branch migration complex subunit RuvA, found in Rickettsia akari (strain Hartford).